A 204-amino-acid polypeptide reads, in one-letter code: MTTFLQRDDFAVTARVLGALFYYSPESHETAPLVQALLNDDWQAQWPLDAEALAPVAVMFKTHSEESLPQAWQRLFIGPYALPSPPWGSVWLDRESVLFGDSTLALRQWMRENGIQFEMQQNEPEDHFGSLLLLAAWLAENGRHHECEQLLAWHLFPWSSRFLDVFIDHAGHPFYQALGQLARLTLAQWQAQLIIPVAVKPLFR.

It belongs to the TorD/DmsD family. DmsD subfamily.

Its function is as follows. Required for biogenesis/assembly of DMSO reductase, but not for the interaction of the DmsA signal peptide with the Tat system. May be part of a chaperone cascade complex that facilitates a folding-maturation pathway for the substrate protein. The chain is Tat proofreading chaperone DmsD from Salmonella paratyphi A (strain ATCC 9150 / SARB42).